We begin with the raw amino-acid sequence, 215 residues long: Abscisic acid receptor PYL6 (215 aa).

The tract at residues 54-209 (HVVGPSQCFS…NLQSLAKLAE (156 aa)) is START-like. Residues Cys61 and Cys190 are joined by a disulfide bond. Residues Lys90, 120–125 (AAFSLE), 147–153 (RLMNYKS), and Glu174 each bind abscisate. A Gate loop motif is present at residues 116 to 120 (SGLPA). Positions 146 to 148 (HRL) match the Latch loop motif.

It belongs to the PYR/PYL/RCAR abscisic acid intracellular receptor family. In terms of assembly, monomer. Homodimer. Binds ABA on one subunit only. Interacts with HAB1, ABI1 and ABI2, and possibly with other PP2Cs. Binds to CARs protein in an ABA-independent manner, both at the plasma membrane and in the nucleus. Interacts directly with CAR1 and CAR4. Interacts with MYC2 in the nucleus. Interaction with MYC2 is increased in the presence of abscisic acid.

It is found in the cytoplasm. It localises to the nucleus. The protein resides in the cell membrane. Receptor for abscisic acid (ABA) required for ABA-mediated responses such as stomatal closure and germination inhibition. Inhibits the activity of group-A protein phosphatases type 2C (PP2Cs) in an ABA-independent manner but more efficiently when activated by ABA. Can be activated by both (-)-ABA and (+)-ABA. May link ABA and jasmonate signaling pathways by modifying MYC2 transcriptional activity, and regulation of JAZ6 and JAZ8 gene expression by MYC2. This Arabidopsis thaliana (Mouse-ear cress) protein is Abscisic acid receptor PYL6 (PYL6).